The sequence spans 969 residues: RNA polymerase-associated protein RapA (969 aa).

Residues 162–339 (EVGQRVAPRV…FARLALLDAD (178 aa)) form the Helicase ATP-binding domain. 175–182 (DEVGLGKT) serves as a coordination point for ATP. The DEAH box motif lies at 285–288 (DEAH). The 172-residue stretch at 492-663 (RIEWLITFLK…IFLKNPQAVG (172 aa)) folds into the Helicase C-terminal domain.

This sequence belongs to the SNF2/RAD54 helicase family. RapA subfamily. Interacts with the RNAP. Has a higher affinity for the core RNAP than for the holoenzyme. Its ATPase activity is stimulated by binding to RNAP.

Its function is as follows. Transcription regulator that activates transcription by stimulating RNA polymerase (RNAP) recycling in case of stress conditions such as supercoiled DNA or high salt concentrations. Probably acts by releasing the RNAP, when it is trapped or immobilized on tightly supercoiled DNA. Does not activate transcription on linear DNA. Probably not involved in DNA repair. The protein is RNA polymerase-associated protein RapA of Actinobacillus pleuropneumoniae serotype 3 (strain JL03).